Consider the following 473-residue polypeptide: Photosystem II CP43 reaction center protein (473 aa).

A propeptide spanning residues 1–14 (MKTLYSLRRFYHVE) is cleaved from the precursor. The residue at position 15 (threonine 15) is an N-acetylthreonine. Threonine 15 carries the post-translational modification Phosphothreonine. The next 5 membrane-spanning stretches (helical) occupy residues 69–93 (LFEV…PHLA), 134–155 (LLGP…KDRN), 178–200 (KALY…RKIT), 255–275 (KPFA…LSYS), and 291–312 (WFNN…ASQA). [CaMn4O5] cluster is bound at residue glutamate 367. A helical membrane pass occupies residues 447 to 471 (RARAAAAGFEKGIDRDFEPVLSMTP).

It belongs to the PsbB/PsbC family. PsbC subfamily. In terms of assembly, PSII is composed of 1 copy each of membrane proteins PsbA, PsbB, PsbC, PsbD, PsbE, PsbF, PsbH, PsbI, PsbJ, PsbK, PsbL, PsbM, PsbT, PsbX, PsbY, PsbZ, Psb30/Ycf12, at least 3 peripheral proteins of the oxygen-evolving complex and a large number of cofactors. It forms dimeric complexes. It depends on Binds multiple chlorophylls and provides some of the ligands for the Ca-4Mn-5O cluster of the oxygen-evolving complex. It may also provide a ligand for a Cl- that is required for oxygen evolution. PSII binds additional chlorophylls, carotenoids and specific lipids. as a cofactor.

It is found in the plastid. The protein resides in the chloroplast thylakoid membrane. Functionally, one of the components of the core complex of photosystem II (PSII). It binds chlorophyll and helps catalyze the primary light-induced photochemical processes of PSII. PSII is a light-driven water:plastoquinone oxidoreductase, using light energy to abstract electrons from H(2)O, generating O(2) and a proton gradient subsequently used for ATP formation. The polypeptide is Photosystem II CP43 reaction center protein (Nicotiana tabacum (Common tobacco)).